Here is a 64-residue protein sequence, read N- to C-terminus: Large ribosomal subunit protein uL29 (64 aa).

The protein belongs to the universal ribosomal protein uL29 family.

The chain is Large ribosomal subunit protein uL29 from Verminephrobacter eiseniae (strain EF01-2).